Consider the following 298-residue polypeptide: Porphobilinogen deaminase (298 aa).

Cys239 bears the S-(dipyrrolylmethanemethyl)cysteine mark.

It belongs to the HMBS family. As to quaternary structure, monomer. It depends on dipyrromethane as a cofactor.

It catalyses the reaction 4 porphobilinogen + H2O = hydroxymethylbilane + 4 NH4(+). It functions in the pathway porphyrin-containing compound metabolism; protoporphyrin-IX biosynthesis; coproporphyrinogen-III from 5-aminolevulinate: step 2/4. Tetrapolymerization of the monopyrrole PBG into the hydroxymethylbilane pre-uroporphyrinogen in several discrete steps. This is Porphobilinogen deaminase from Ehrlichia canis (strain Jake).